Reading from the N-terminus, the 62-residue chain is DNA-binding protein 7 (62 aa).

The protein belongs to the 7 kDa DNA-binding/endoribonuclease P2 family. In terms of assembly, monomer.

The protein resides in the cytoplasm. Its function is as follows. Can constrain negative DNA supercoils. May be involved in maintaining the integrity of the genome at high temperature. This chain is DNA-binding protein 7, found in Metallosphaera sedula (strain ATCC 51363 / DSM 5348 / JCM 9185 / NBRC 15509 / TH2).